We begin with the raw amino-acid sequence, 131 residues long: Mediator of RNA polymerase II transcription subunit 31 (131 aa).

At alanine 2 the chain carries N-acetylalanine.

This sequence belongs to the Mediator complex subunit 31 family. In terms of assembly, component of the Mediator complex, which is composed of MED1, MED4, MED6, MED7, MED8, MED9, MED10, MED11, MED12, MED13, MED13L, MED14, MED15, MED16, MED17, MED18, MED19, MED20, MED21, MED22, MED23, MED24, MED25, MED26, MED27, MED29, MED30, MED31, CCNC, CDK8 and CDC2L6/CDK11. The MED12, MED13, CCNC and CDK8 subunits form a distinct module termed the CDK8 module. Mediator containing the CDK8 module is less active than Mediator lacking this module in supporting transcriptional activation. Individual preparations of the Mediator complex lacking one or more distinct subunits have been variously termed ARC, CRSP, DRIP, PC2, SMCC and TRAP.

Its subcellular location is the nucleus. Its function is as follows. Component of the Mediator complex, a coactivator involved in the regulated transcription of nearly all RNA polymerase II-dependent genes. Mediator functions as a bridge to convey information from gene-specific regulatory proteins to the basal RNA polymerase II transcription machinery. Mediator is recruited to promoters by direct interactions with regulatory proteins and serves as a scaffold for the assembly of a functional preinitiation complex with RNA polymerase II and the general transcription factors. The polypeptide is Mediator of RNA polymerase II transcription subunit 31 (MED31) (Bos taurus (Bovine)).